The primary structure comprises 233 residues: Attacin-B (233 aa).

A signal peptide spans M1–S17. A propeptide spanning residues R18–R46 is cleaved from the precursor.

Belongs to the attacin/sarcotoxin-2 family.

It is found in the secreted. In terms of biological role, hemolymph antibacterial protein. This Hyalophora cecropia (Cecropia moth) protein is Attacin-B.